The chain runs to 341 residues: UDP-3-O-acylglucosamine N-acyltransferase 2 (341 aa).

Histidine 254 acts as the Proton acceptor in catalysis.

Belongs to the transferase hexapeptide repeat family. LpxD subfamily. In terms of assembly, homotrimer.

It catalyses the reaction a UDP-3-O-[(3R)-3-hydroxyacyl]-alpha-D-glucosamine + a (3R)-hydroxyacyl-[ACP] = a UDP-2-N,3-O-bis[(3R)-3-hydroxyacyl]-alpha-D-glucosamine + holo-[ACP] + H(+). It participates in bacterial outer membrane biogenesis; LPS lipid A biosynthesis. Functionally, catalyzes the N-acylation of UDP-3-O-acylglucosamine using 3-hydroxyacyl-ACP as the acyl donor. Is involved in the biosynthesis of lipid A, a phosphorylated glycolipid that anchors the lipopolysaccharide to the outer membrane of the cell. The polypeptide is UDP-3-O-acylglucosamine N-acyltransferase 2 (Nitrobacter winogradskyi (strain ATCC 25391 / DSM 10237 / CIP 104748 / NCIMB 11846 / Nb-255)).